The chain runs to 422 residues: Osteomodulin (422 aa).

A signal peptide spans 1-20 (MGFSSLVCVLFFFLGVKVYC). The propeptide occupies 21–27 (QYESYQW). Sulfotyrosine occurs at positions 22, 25, 31, 39, 51, and 77. Positions 53–91 (APFHQHTLGCASECFCPPNFPSSMYCDNRKLKTIPNIPA) constitute an LRRNT domain. 11 LRR repeats span residues 92-113 (HIQQ…SFIN), 116-129 (HLKE…KIKS), 142-164 (NLLQ…PKSL), 165-184 (ERIF…AVNG), 187-207 (NLTM…QEKV), 213-233 (KLMQ…GLPS), 234-255 (SLMY…YFNK), 258-280 (KLHA…FNLS), 281-294 (NLIE…KLKQ), 301-322 (NLEH…VMCP), and 331-353 (HLTH…IFLC). 2 N-linked (GlcNAc...) asparagine glycosylation sites follow: Asn-113 and Asn-121. An N-linked (GlcNAc...) asparagine glycan is attached at Asn-187. 2 N-linked (GlcNAc...) asparagine glycosylation sites follow: Asn-242 and Asn-278. A glycan (N-linked (GlcNAc...) asparagine) is linked at Asn-316. Cys-321 and Cys-353 are oxidised to a cystine. Residues 385–422 (DDGDSEDHDDHHEGPEEEGTEENIDAHYYGSQEWQETI) are disordered. 2 positions are modified to sulfotyrosine: Tyr-412 and Tyr-413.

It belongs to the small leucine-rich proteoglycan (SLRP) family. SLRP class II subfamily. In terms of assembly, binds the alpha(V)beta(3)-integrin. Post-translationally, the N-terminus is blocked. Glycosylated; contains keratan sulfate. In terms of processing, sulfated on tyrosine residue(s). In terms of tissue distribution, bone specific (at protein level).

The protein resides in the secreted. It localises to the extracellular space. It is found in the extracellular matrix. Its function is as follows. May be implicated in biomineralization processes. Has a function in binding of osteoblasts via the alpha(V)beta(3)-integrin. In Bos taurus (Bovine), this protein is Osteomodulin (OMD).